A 176-amino-acid chain; its full sequence is Ribosome rescue factor SmrB (176 aa).

One can recognise a Smr domain in the interval 93–168 (LDLHGYRQSE…GDAALLVLID (76 aa)).

The protein belongs to the SmrB family. In terms of assembly, associates with collided ribosomes, but not with correctly translating polysomes.

Acts as a ribosome collision sensor. Detects stalled/collided disomes (pairs of ribosomes where the leading ribosome is stalled and a second ribosome has collided with it) and endonucleolytically cleaves mRNA at the 5' boundary of the stalled ribosome. Stalled/collided disomes form a new interface (primarily via the 30S subunits) that binds SmrB. Cleaved mRNA becomes available for tmRNA ligation, leading to ribosomal subunit dissociation and rescue of stalled ribosomes. The protein is Ribosome rescue factor SmrB of Shewanella oneidensis (strain ATCC 700550 / JCM 31522 / CIP 106686 / LMG 19005 / NCIMB 14063 / MR-1).